The chain runs to 482 residues: CBL-interacting serine/threonine-protein kinase 23 (482 aa).

The span at 1–25 (MASRTTPSRSTPSRSTPSGSSSGGR) shows a compositional bias: low complexity. The segment at 1–29 (MASRTTPSRSTPSRSTPSGSSSGGRTRVG) is disordered. The region spanning 31-286 (YELGRTLGEG…FAEVIENEWF (256 aa)) is the Protein kinase domain. Residues 37–45 (LGEGTFAKV) and Lys60 each bind ATP. Catalysis depends on Asp154, which acts as the Proton acceptor. An activation loop region spans residues 172–201 (DFGLSALPQQVREDGLLHTTCGTPNYVAPE). Ser176 is modified (phosphoserine). Thr190 bears the Phosphothreonine mark. The region spanning 328-352 (KTPVTMNAFELISTSQGLNLGSLFE) is the NAF domain. The interval 359–388 (KRKTRFTSKSSANEIVTKIEAAAAPMGFDV) is PPI. Residues 459 to 482 (KEEGTDGGGTNGAMANRTIAKQST) form a disordered region.

Belongs to the protein kinase superfamily. CAMK Ser/Thr protein kinase family. SNF1 subfamily. Part of a K(+)-channel calcium-sensing kinase/phosphatase complex composed by a calcium sensor CBL (CBL1, CBL2, CBL3 or CBL9), a kinase CIPK (CIPK6, CIPK16 or CIPK23), a phosphatase PP2C (AIP1) and a K(+)-channel (AKT1). Interacts with AKT1, CBL1, CBL2, CBL3, CBL5, CBL8, CBL9 and NRT1.1. Requires Mn(2+) as cofactor. Autophosphorylated. In seedlings, mostly in vascular bundles, and in roots, especially in cortex and endodermis cells. In adult plants, mostly expressed in flowers, and, to a lower extent, in roots, leaves, stems and siliques, particularly in vascular tissues. Also detected in guard cells and root hairs.

It localises to the cell membrane. It catalyses the reaction L-seryl-[protein] + ATP = O-phospho-L-seryl-[protein] + ADP + H(+). The enzyme catalyses L-threonyl-[protein] + ATP = O-phospho-L-threonyl-[protein] + ADP + H(+). Its function is as follows. CIPK serine-threonine protein kinases interact with CBL proteins. Binding of a CBL protein to the regulatory NAF domain of CIPK protein leads to activation of the kinase in a calcium-dependent manner. Downstream of CBL1, CBL2, CBL3 and CBL9, regulates by phosphorylation the K(+) conductance and uptake of AKT1 in low K(+) condition, in response to calcium signaling and during the stomatal opening regulation by monitoring the turgor pressure in guard cells. In response to low nitrate concentration, phosphorylates NRT1.1, switching it from a low-affinity nitrate transporter to a high-affinity transporter. Confers tolerance to low potassium conditions. Involved in drought sensitivity and leaf transpiration. The polypeptide is CBL-interacting serine/threonine-protein kinase 23 (CIPK23) (Arabidopsis thaliana (Mouse-ear cress)).